The chain runs to 885 residues: Cadherin-1 (885 aa).

Residues 1–26 form the signal peptide; that stretch reads MGPRYGGAPALLLPLLLLLQVSSGLC. A propeptide spanning residues 27–156 is cleaved from the precursor; that stretch reads QEPEPCRPGF…SQHGLRRQKR (130 aa). Residues 121–131 show a composition bias toward basic residues; that stretch reads KAATHHHHHHH. Residues 121 to 141 are disordered; sequence KAATHHHHHHHDAPSKTQTEV. The Extracellular portion of the chain corresponds to 157 to 712; it reads DWVIPPISCP…YAEAGLQVPA (556 aa). 5 consecutive Cadherin domains span residues 158-264, 265-377, 378-488, 489-597, and 607-688; these read WVIP…KPEF, TQAV…PPIF, NPTT…APIF, IPCP…GPIP, and KNPQ…VFVC. Asp259 contributes to the Ca(2+) binding site. O-linked (Man...) serine glycosylation is present at Ser282. Thr287 is a glycosylation site (O-linked (Man...) threonine). Residue Asp290 coordinates Ca(2+). O-linked (Man...) threonine glycosylation is found at Thr360, Thr472, Thr474, and Thr511. N-linked (GlcNAc...) asparagine glycosylation occurs at Asn560. Residues Thr578, Thr580, and Thr582 are each glycosylated (O-linked (Man...) threonine). Asn639 carries an N-linked (GlcNAc...) asparagine glycan. A helical transmembrane segment spans residues 713 to 733; it reads ILGILGGILALLILILLLLLF. Over 734-885 the chain is Cytoplasmic; that stretch reads VRRRRVVKEP…ADMYGGGEDD (152 aa). The interval 750 to 770 is disordered; sequence DTRDNVYYYDEEGGGEEDQDF. Tyr756, Tyr757, and Tyr758 each carry phosphotyrosine; by SRC. Residues 758–770 are compositionally biased toward acidic residues; that stretch reads YDEEGGGEEDQDF. The required for binding CTNND1 and PSEN1 stretch occupies residues 761–772; sequence EGGGEEDQDFDL. Phosphoserine is present on residues Ser773, Ser796, Ser841, Ser843, and Ser849. Positions 792-811 are disordered; sequence PTLLSVPQYRPRPANPDEIG. Residues 814-885 form a required for binding alpha, beta and gamma catenins region; it reads IDENLKAADT…ADMYGGGEDD (72 aa).

Homodimer; disulfide-linked. Component of an E-cadherin/ catenin adhesion complex composed of at least E-cadherin/CDH1, beta-catenin/CTNNB1 or gamma-catenin/JUP, and potentially alpha-catenin/CTNNA1; the complex is located to adherens junctions. Found in a complex composed of CDH1, RAP1A and PKP3; PKP3 acts as a scaffold protein within the complex, the complex is required for CDH1 localization to mature desmosome cell junctions. Interacts with the TRPV4 and CTNNB1 complex. Interacts with CTNND1. The stable association of CTNNA1 is controversial as CTNNA1 was shown not to bind to F-actin when assembled in the complex. Alternatively, the CTNNA1-containing complex may be linked to F-actin by other proteins such as LIMA1. Interaction with PSEN1, cleaves CDH1 resulting in the disassociation of cadherin-based adherens junctions (CAJs). Interacts with AJAP1 and DLGAP5. Interacts with TBC1D2. Interacts with LIMA1. Interacts with CAV1. Interacts with PIP5K1C. Interacts with RAB8B. Interacts with DDR1; this stabilizes CDH1 at the cell surface and inhibits its internalization. Interacts with RAPGEF2. Interacts with KLRG1. Forms a ternary complex composed of ADAM10, CADH1 and EPHA4; within the complex, CADH1 is cleaved by ADAM10 which disrupts adherens junctions. Interacts with SPEF1. Interacts with CTNNB1 and PKP2. Interacts with AMOTL2; the interaction may facilitate binding of radial actin fibers to cell junction complexes. Interacts with DSG3; the interaction is required for CDH1 localization to developing adherens junctions. In terms of processing, during apoptosis or with calcium influx, cleaved by a membrane-bound metalloproteinase (ADAM10), PS1/gamma-secretase and caspase-3. Processing by the metalloproteinase, induced by calcium influx, causes disruption of cell-cell adhesion and the subsequent release of beta-catenin into the cytoplasm. The residual membrane-tethered cleavage product is rapidly degraded via an intracellular proteolytic pathway. Cleavage by caspase-3 releases the cytoplasmic tail resulting in disintegration of the actin microfilament system. The gamma-secretase-mediated cleavage promotes disassembly of adherens junctions. During development of the cochlear organ of Corti, cleavage by ADAM10 at adherens junctions promotes pillar cell separation. N-glycosylation at Asn-639 is essential for expression, folding and trafficking. Addition of bisecting N-acetylglucosamine by MGAT3 modulates its cell membrane location. Post-translationally, ubiquitinated by a SCF complex containing SKP2, which requires prior phosphorylation by CK1/CSNK1A1. Ubiquitinated by CBLL1/HAKAI, requires prior phosphorylation at Tyr-757. In terms of processing, O-glycosylated. O-manosylated by TMTC1, TMTC2, TMTC3 or TMTC4. Thr-287 and Thr-511 are O-mannosylated by TMTC2 or TMTC4 but not TMTC1 or TMTC3.

The protein localises to the cell junction. The protein resides in the adherens junction. Its subcellular location is the cell membrane. It is found in the endosome. It localises to the golgi apparatus. The protein localises to the trans-Golgi network. The protein resides in the cytoplasm. Its subcellular location is the desmosome. Its function is as follows. Cadherins are calcium-dependent cell adhesion proteins. They preferentially interact with themselves in a homophilic manner in connecting cells; cadherins may thus contribute to the sorting of heterogeneous cell types. CDH1 is involved in mechanisms regulating cell-cell adhesions, mobility and proliferation of epithelial cells. Promotes organization of radial actin fiber structure and cellular response to contractile forces, via its interaction with AMOTL2 which facilitates anchoring of radial actin fibers to CDH1 junction complexes at the cell membrane. Plays a role in the early stages of desmosome cell-cell junction formation via facilitating the recruitment of DSG2 and DSP to desmosome plaques. Has a potent invasive suppressor role. It is a ligand for integrin alpha-E/beta-7. In terms of biological role, E-Cad/CTF2 promotes non-amyloidogenic degradation of Abeta precursors. Has a strong inhibitory effect on APP C99 and C83 production. The protein is Cadherin-1 (CDH1) of Canis lupus familiaris (Dog).